Consider the following 543-residue polypeptide: Chaperonin GroEL (543 aa).

ATP is bound by residues 29 to 32, 86 to 90, Gly413, 476 to 478, and Asp492; these read TLGP, DGTTT, and NAA.

Belongs to the chaperonin (HSP60) family. As to quaternary structure, forms a cylinder of 14 subunits composed of two heptameric rings stacked back-to-back. Interacts with the co-chaperonin GroES.

It is found in the cytoplasm. The catalysed reaction is ATP + H2O + a folded polypeptide = ADP + phosphate + an unfolded polypeptide.. Its function is as follows. Together with its co-chaperonin GroES, plays an essential role in assisting protein folding. The GroEL-GroES system forms a nano-cage that allows encapsulation of the non-native substrate proteins and provides a physical environment optimized to promote and accelerate protein folding. This is Chaperonin GroEL from Streptococcus pyogenes serotype M49 (strain NZ131).